Here is a 312-residue protein sequence, read N- to C-terminus: Malate dehydrogenase (312 aa).

NAD(+)-binding positions include 7-13 (GAAGGIG) and Asp34. Residues Arg81 and Arg87 each coordinate substrate. NAD(+) is bound by residues Asn94 and 117–119 (ITN). Residues Asn119 and Arg153 each coordinate substrate. His177 serves as the catalytic Proton acceptor. Met227 serves as a coordination point for NAD(+).

It belongs to the LDH/MDH superfamily. MDH type 1 family. As to quaternary structure, homodimer.

It catalyses the reaction (S)-malate + NAD(+) = oxaloacetate + NADH + H(+). In terms of biological role, catalyzes the reversible oxidation of malate to oxaloacetate. The protein is Malate dehydrogenase of Shigella dysenteriae serotype 1 (strain Sd197).